The primary structure comprises 164 residues: Lipoprotein signal peptidase (164 aa).

The next 3 membrane-spanning stretches (helical) occupy residues 12–32 (WLWL…LILQ), 70–90 (WFFA…MYRL), and 102–122 (ALII…GFVV). Active-site residues include Asp123 and Asp141. The chain crosses the membrane as a helical span at residues 137–157 (FNLADTAICVGAALIVLEGFL).

Belongs to the peptidase A8 family.

It localises to the cell inner membrane. The catalysed reaction is Release of signal peptides from bacterial membrane prolipoproteins. Hydrolyzes -Xaa-Yaa-Zaa-|-(S,diacylglyceryl)Cys-, in which Xaa is hydrophobic (preferably Leu), and Yaa (Ala or Ser) and Zaa (Gly or Ala) have small, neutral side chains.. It participates in protein modification; lipoprotein biosynthesis (signal peptide cleavage). Functionally, this protein specifically catalyzes the removal of signal peptides from prolipoproteins. This chain is Lipoprotein signal peptidase, found in Shigella boydii serotype 4 (strain Sb227).